Consider the following 504-residue polypeptide: L-amino-acid oxidase (504 aa).

Positions 1–18 (MNVFFMFSLLFLAALGSC) are cleaved as a signal peptide. Cysteines 28 and 191 form a disulfide. FAD contacts are provided by residues 61–62 (MS), 81–82 (EA), R89, and 105–108 (GPMR). R108 contributes to the substrate binding site. N-linked (GlcNAc...) asparagine glycosylation occurs at N190. Residue H241 participates in substrate binding. Residue V279 participates in FAD binding. An intrachain disulfide couples C349 to C430. N379 is a glycosylation site (N-linked (GlcNAc...) asparagine). Position 390 (Y390) interacts with substrate. FAD contacts are provided by residues E475 and 482-487 (GWIDST). 482–483 (GW) lines the substrate pocket.

This sequence belongs to the flavin monoamine oxidase family. FIG1 subfamily. As to quaternary structure, homodimer; non-covalently linked. FAD serves as cofactor. In terms of tissue distribution, expressed by the venom gland.

Its subcellular location is the secreted. The catalysed reaction is an L-alpha-amino acid + O2 + H2O = a 2-oxocarboxylate + H2O2 + NH4(+). The enzyme catalyses L-leucine + O2 + H2O = 4-methyl-2-oxopentanoate + H2O2 + NH4(+). Functionally, catalyzes an oxidative deamination of predominantly hydrophobic and aromatic L-amino acids, thus producing hydrogen peroxide that may contribute to the diverse toxic effects of this enzyme. Shows activity on L-Leu. Exhibits diverse biological activities, such as apoptosis, and inhibition of agonist- and shear stress-induced platelet aggregation (SIPA). Effects of snake L-amino oxidases on platelets are controversial, since they either induce aggregation or inhibit agonist-induced aggregation. These different effects are probably due to different experimental conditions. This protein may also induce hemorrhage, hemolysis, edema, antibacterial and antiparasitic activities. This chain is L-amino-acid oxidase, found in Gloydius blomhoffii (Mamushi).